A 393-amino-acid chain; its full sequence is Selenide, water dikinase (393 aa).

A disordered region spans residues methionine 1–aspartate 21. Cysteine 42 is an active-site residue. ATP is bound by residues lysine 45, glycine 68–aspartate 70, aspartate 93, aspartate 116, and glycine 167–threonine 170. Aspartate 70 contacts Mg(2+). Aspartate 116 serves as a coordination point for Mg(2+). Aspartate 273 serves as a coordination point for Mg(2+).

It belongs to the selenophosphate synthase 1 family. Class I subfamily. Homodimer. Requires Mg(2+) as cofactor.

It catalyses the reaction hydrogenselenide + ATP + H2O = selenophosphate + AMP + phosphate + 2 H(+). Functionally, synthesizes selenophosphate from selenide and ATP. The polypeptide is Selenide, water dikinase (Trypanosoma brucei brucei (strain 927/4 GUTat10.1)).